Reading from the N-terminus, the 364-residue chain is DNA replication and repair protein RecF (364 aa).

An ATP-binding site is contributed by glycine 30–threonine 37.

This sequence belongs to the RecF family.

It is found in the cytoplasm. The RecF protein is involved in DNA metabolism; it is required for DNA replication and normal SOS inducibility. RecF binds preferentially to single-stranded, linear DNA. It also seems to bind ATP. The protein is DNA replication and repair protein RecF of Geotalea uraniireducens (strain Rf4) (Geobacter uraniireducens).